A 152-amino-acid chain; its full sequence is Antiholin-like protein LrgA (152 aa).

The next 4 helical transmembrane spans lie at 23–43, 45–65, 77–97, and 108–128; these read YSIFQQALTIAVILLISKIIE, FMPIPMPASVIGLVLLFIALC, VGTALTNNIGFLFVPAGISVI, and ILIILLIIISTLLLLICTGFA.

The protein belongs to the CidA/LrgA family. LrgA subfamily.

It is found in the cell membrane. In terms of biological role, inhibits the expression or activity of extracellular murein hydrolases by interacting, possibly with LrgB, with the holin-like proteins CidA and/or CidB. The LrgAB and CidAB proteins may affect the proton motive force of the membrane. May be involved in programmed cell death (PCD), possibly triggering PCD in response to antibiotics and environmental stresses. This chain is Antiholin-like protein LrgA, found in Staphylococcus epidermidis (strain ATCC 35984 / DSM 28319 / BCRC 17069 / CCUG 31568 / BM 3577 / RP62A).